The chain runs to 430 residues: Probable sugar isomerase mlr5709 (430 aa).

Residues histidine 257, aspartate 289, and aspartate 291 each contribute to the Mn(2+) site.

Belongs to the rhamnose isomerase family. Mn(2+) serves as cofactor.

The polypeptide is Probable sugar isomerase mlr5709 (Mesorhizobium japonicum (strain LMG 29417 / CECT 9101 / MAFF 303099) (Mesorhizobium loti (strain MAFF 303099))).